The following is a 172-amino-acid chain: Shikimate kinase (172 aa).

11-16 (GAGKST) provides a ligand contact to ATP. S15 contacts Mg(2+). D33, R57, and G79 together coordinate substrate. R117 contacts ATP. A substrate-binding site is contributed by R136. R153 is a binding site for ATP.

The protein belongs to the shikimate kinase family. In terms of assembly, monomer. The cofactor is Mg(2+).

The protein resides in the cytoplasm. The enzyme catalyses shikimate + ATP = 3-phosphoshikimate + ADP + H(+). Its pathway is metabolic intermediate biosynthesis; chorismate biosynthesis; chorismate from D-erythrose 4-phosphate and phosphoenolpyruvate: step 5/7. Functionally, catalyzes the specific phosphorylation of the 3-hydroxyl group of shikimic acid using ATP as a cosubstrate. The sequence is that of Shikimate kinase from Pseudomonas aeruginosa (strain LESB58).